Reading from the N-terminus, the 337-residue chain is uncharacterized protein (337 aa).

Residues 12–60 (SLNYVDLPDTVHRKIFEYLNPWEIFKLSRISKAIHVTILKNKKFAVKDI) form the F-box domain.

This is an uncharacterized protein from Caenorhabditis elegans.